A 252-amino-acid polypeptide reads, in one-letter code: Probable 6-phosphogluconolactonase 5 (252 aa).

The protein belongs to the glucosamine/galactosamine-6-phosphate isomerase family. 6-phosphogluconolactonase subfamily.

The protein localises to the cytoplasm. It localises to the cytosol. It carries out the reaction 6-phospho-D-glucono-1,5-lactone + H2O = 6-phospho-D-gluconate + H(+). The protein operates within carbohydrate degradation; pentose phosphate pathway; D-ribulose 5-phosphate from D-glucose 6-phosphate (oxidative stage): step 2/3. Catalyzes the hydrolysis of 6-phosphogluconolactone to 6-phosphogluconate. The protein is Probable 6-phosphogluconolactonase 5 of Arabidopsis thaliana (Mouse-ear cress).